Here is a 506-residue protein sequence, read N- to C-terminus: Tetratricopeptide repeat protein 8 (506 aa).

Residues 83–112 (RPGTSFARPKTSAKGVNPILRPTTNAGRPL) form a disordered region. TPR repeat units follow at residues 217-250 (YYWK…KKLI), 251-283 (ETFA…FPEN), 284-317 (VTML…ESNN), 319-351 (EAIA…GVSS), 353-385 (ELFL…MTDD), 388-421 (ADVW…DPDH), 423-455 (ESLV…NPYM), and 456-489 (FEGN…FPEH).

As to quaternary structure, part of BBSome complex, that contains at least bbs-1, bbs-2, bbs-4, bbs-5, osm-12, bbs-8/ttc-8 and bbs-9. Expressed in head and tail neurons. Expressed in ciliated male tail-neurons. Expressed in thermosensory and CO(2) sensory AFD neurons.

It localises to the cell projection. The protein localises to the cilium. Its subcellular location is the cytoplasm. The protein resides in the cytoskeleton. It is found in the cilium basal body. It localises to the cilium axoneme. In terms of biological role, component of the BBSome complex. The BBSome complex is thought to function as a coat complex required for sorting of specific membrane proteins to the primary cilia. The BBSome complex is required for ciliogenesis but is dispensable for centriolar satellite function. Required for proper BBSome complex assembly and its ciliary localization. Required for cilia biogenesis and both the assembly and movement of intraflagellar transport proteins along the ciliary axoneme. Plays a role in guanylyl cyclase localization in the ring-like structures at the base of the finger compartment in AFD sensory neurons. The protein is Tetratricopeptide repeat protein 8 of Caenorhabditis elegans.